Consider the following 423-residue polypeptide: Glucoside xylosyltransferase 2 (423 aa).

Over methionine 1–lysine 6 the chain is Cytoplasmic. Residues phenylalanine 7–glycine 26 traverse the membrane as a helical; Signal-anchor for type II membrane protein segment. At asparagine 27–valine 423 the chain is on the lumenal side. The tract at residues arginine 60–proline 85 is disordered. N-linked (GlcNAc...) asparagine glycans are attached at residues asparagine 215 and asparagine 256.

The protein belongs to the glycosyltransferase 8 family.

It is found in the membrane. It carries out the reaction 3-O-(beta-D-glucosyl)-L-seryl-[EGF-like domain protein] + UDP-alpha-D-xylose = 3-O-[alpha-D-xylosyl-(1-&gt;3)-beta-D-glucosyl]-L-seryl-[EGF-like domain protein] + UDP + H(+). In terms of biological role, glycosyltransferase which elongates the O-linked glucose attached to EGF-like repeats in the extracellular domain of Notch proteins by catalyzing the addition of xylose. The protein is Glucoside xylosyltransferase 2 (gxylt2) of Xenopus laevis (African clawed frog).